A 485-amino-acid polypeptide reads, in one-letter code: Transcription factor ETV6 (485 aa).

Positions Met-1 to Ile-10 are enriched in polar residues. The disordered stretch occupies residues Met-1–Pro-32. An N6-acetyllysine; alternate modification is found at Lys-11. Lys-11 is covalently cross-linked (Glycyl lysine isopeptide (Lys-Gly) (interchain with G-Cter in SUMO2); alternate). At Thr-18 the chain carries Phosphothreonine. The residue at position 22 (Ser-22) is a Phosphoserine. Positions Ala-41–Arg-125 constitute a PNT domain. Residues Asn-157–Met-210 form a disordered region. Position 165 is a phosphothreonine (Thr-165). Phosphoserine is present on residues Ser-215, Ser-240, and Ser-251. A Glycyl lysine isopeptide (Lys-Gly) (interchain with G-Cter in SUMO2) cross-link involves residue Lys-284. Lys-298 carries the post-translational modification N6-acetyllysine; alternate. Lys-298 participates in a covalent cross-link: Glycyl lysine isopeptide (Lys-Gly) (interchain with G-Cter in SUMO2); alternate. A Phosphoserine modification is found at Ser-319. Residues Arg-335–Met-416 constitute a DNA-binding region (ETS). Residues Lys-399 and Lys-417 each participate in a glycyl lysine isopeptide (Lys-Gly) (interchain with G-Cter in SUMO2) cross-link. The interval Glu-440 to Glu-485 is disordered.

The protein belongs to the ETS family. In terms of assembly, can form homodimers or heterodimers with TEL2 or FLI1. Interacts with L3MBTL1 and HDAC9.

The protein localises to the nucleus. Transcriptional repressor; binds to the DNA sequence 5'-CCGGAAGT-3'. Plays a role in hematopoiesis and malignant transformation. In Mus musculus (Mouse), this protein is Transcription factor ETV6 (Etv6).